The primary structure comprises 300 residues: tRNA dimethylallyltransferase (300 aa).

Position 11 to 18 (11 to 18 (GPTAVGKS)) interacts with ATP. 13 to 18 (TAVGKS) contacts substrate. The interval 35-38 (DSIQ) is interaction with substrate tRNA.

It belongs to the IPP transferase family. Monomer. The cofactor is Mg(2+).

The catalysed reaction is adenosine(37) in tRNA + dimethylallyl diphosphate = N(6)-dimethylallyladenosine(37) in tRNA + diphosphate. In terms of biological role, catalyzes the transfer of a dimethylallyl group onto the adenine at position 37 in tRNAs that read codons beginning with uridine, leading to the formation of N6-(dimethylallyl)adenosine (i(6)A). The protein is tRNA dimethylallyltransferase of Borreliella afzelii (strain PKo) (Borrelia afzelii).